The primary structure comprises 290 residues: MTITGKTRVTGIIGWPVAHSLSPPMHNAAFEALGLDFAYVPFPVAPERLAAGIAGLAALGVVGFSVTIPHKVAILPLLDRIAPEAELIGAVNTVAVKEGILTGYNTDGIGLLSALRSKLGFQPEGRSVLVLGAGGAARSAVASLGLAGAGRVEVANRSLDAGRGLAETMGERLPGTVFGFQPLGRVSDKGYLSGFDLVVNTTSVGMAGDGFAGLDLSALKRGASVYDMVYAPLVTPLLAQAEVVGVPSANGLGMLAAQGEAAFRIWTGAVPPEGCMEKALAARLATPGNP.

Shikimate contacts are provided by residues 20–22 (SLS) and Thr67. Residue Lys71 is the Proton acceptor of the active site. Asn92 and Asp107 together coordinate shikimate. NADP(+) contacts are provided by residues 132 to 136 (GAGGA) and Met228. Position 230 (Tyr230) interacts with shikimate. Gly251 contacts NADP(+).

It belongs to the shikimate dehydrogenase family. In terms of assembly, homodimer.

It catalyses the reaction shikimate + NADP(+) = 3-dehydroshikimate + NADPH + H(+). It participates in metabolic intermediate biosynthesis; chorismate biosynthesis; chorismate from D-erythrose 4-phosphate and phosphoenolpyruvate: step 4/7. In terms of biological role, involved in the biosynthesis of the chorismate, which leads to the biosynthesis of aromatic amino acids. Catalyzes the reversible NADPH linked reduction of 3-dehydroshikimate (DHSA) to yield shikimate (SA). In Geobacter sp. (strain M21), this protein is Shikimate dehydrogenase (NADP(+)).